Reading from the N-terminus, the 304-residue chain is MTTEIRNIKLVQKIASGAFGDIFIGQNTVTNQTVAVKLEKKAHYGQLKHEYGVYKALGGTRTPRIYEYGKILYENVYVNGLVMELMGKSLEQLFVTCSRRFSLKTVLMLGERMVDNVEYLHHRNYVHRDIKPDNFVFDVQGDRLYLIDYGLAKEFRNPMTFKHREMRTDKSLTGTARYASLRTHQGYEQSRRDDLESVGFCMVYFLKGRLPWQGLKAKTKQEKYDRIRESKESISLYELCMGLPKEIHSFCFYVRNLGYEDMPNYAYLRTLLSDALRQRGLRSDGVFDWMVRTPSDSMGDLEIL.

One can recognise a Protein kinase domain in the interval 8–304; the sequence is IKLVQKIASG…SDSMGDLEIL (297 aa). ATP is bound by residues 14–22 and K37; that span reads IASGAFGDI. The Proton acceptor role is filled by D129.

Belongs to the protein kinase superfamily. CK1 Ser/Thr protein kinase family. Casein kinase I subfamily.

It localises to the nucleus. The enzyme catalyses L-seryl-[protein] + ATP = O-phospho-L-seryl-[protein] + ADP + H(+). The catalysed reaction is L-threonyl-[protein] + ATP = O-phospho-L-threonyl-[protein] + ADP + H(+). Involved in DNA repair. May regulate the activity of protein(s) involved in double strand break repair caused by gamma rays. This Encephalitozoon cuniculi (strain GB-M1) (Microsporidian parasite) protein is Probable casein kinase I homolog ECU03_0910.